Consider the following 142-residue polypeptide: Hemoglobin subunit alpha (142 aa).

N-acetylserine is present on serine 1. Positions 1-142 (SLSDKDKADV…LALALGQKYR (142 aa)) constitute a Globin domain. Histidine 58 provides a ligand contact to O2. Residue histidine 88 participates in heme b binding.

This sequence belongs to the globin family. In terms of assembly, heterotetramer of two alpha chains and two beta chains. Red blood cells.

In terms of biological role, involved in oxygen transport from gills to the various peripheral tissues. This is Hemoglobin subunit alpha (hba) from Catostomus clarkii (Desert sucker).